Reading from the N-terminus, the 181-residue chain is Protein Syd (181 aa).

Belongs to the Syd family.

It is found in the cell inner membrane. Its function is as follows. Interacts with the SecY protein in vivo. May bind preferentially to an uncomplexed state of SecY, thus functioning either as a chelating agent for excess SecY in the cell or as a regulatory factor that negatively controls the translocase function. This is Protein Syd from Escherichia coli O81 (strain ED1a).